A 216-amino-acid chain; its full sequence is Probable transaldolase (216 aa).

Catalysis depends on K83, which acts as the Schiff-base intermediate with substrate.

Belongs to the transaldolase family. Type 3B subfamily.

It is found in the cytoplasm. The catalysed reaction is D-sedoheptulose 7-phosphate + D-glyceraldehyde 3-phosphate = D-erythrose 4-phosphate + beta-D-fructose 6-phosphate. It functions in the pathway carbohydrate degradation; pentose phosphate pathway; D-glyceraldehyde 3-phosphate and beta-D-fructose 6-phosphate from D-ribose 5-phosphate and D-xylulose 5-phosphate (non-oxidative stage): step 2/3. In terms of biological role, transaldolase is important for the balance of metabolites in the pentose-phosphate pathway. The chain is Probable transaldolase from Shouchella clausii (strain KSM-K16) (Alkalihalobacillus clausii).